Consider the following 188-residue polypeptide: Elongation factor P (188 aa).

This sequence belongs to the elongation factor P family.

It localises to the cytoplasm. It participates in protein biosynthesis; polypeptide chain elongation. In terms of biological role, involved in peptide bond synthesis. Stimulates efficient translation and peptide-bond synthesis on native or reconstituted 70S ribosomes in vitro. Probably functions indirectly by altering the affinity of the ribosome for aminoacyl-tRNA, thus increasing their reactivity as acceptors for peptidyl transferase. This chain is Elongation factor P, found in Phenylobacterium zucineum (strain HLK1).